The chain runs to 212 residues: Thiamine-phosphate synthase (212 aa).

Residue 38 to 42 (QLREK) participates in 4-amino-2-methyl-5-(diphosphooxymethyl)pyrimidine binding. Residues Asp71 and Asp90 each contribute to the Mg(2+) site. Residue Lys138 coordinates 4-amino-2-methyl-5-(diphosphooxymethyl)pyrimidine. A 2-[(2R,5Z)-2-carboxy-4-methylthiazol-5(2H)-ylidene]ethyl phosphate-binding site is contributed by Gly166.

Belongs to the thiamine-phosphate synthase family. Mg(2+) is required as a cofactor.

The catalysed reaction is 2-[(2R,5Z)-2-carboxy-4-methylthiazol-5(2H)-ylidene]ethyl phosphate + 4-amino-2-methyl-5-(diphosphooxymethyl)pyrimidine + 2 H(+) = thiamine phosphate + CO2 + diphosphate. It carries out the reaction 2-(2-carboxy-4-methylthiazol-5-yl)ethyl phosphate + 4-amino-2-methyl-5-(diphosphooxymethyl)pyrimidine + 2 H(+) = thiamine phosphate + CO2 + diphosphate. It catalyses the reaction 4-methyl-5-(2-phosphooxyethyl)-thiazole + 4-amino-2-methyl-5-(diphosphooxymethyl)pyrimidine + H(+) = thiamine phosphate + diphosphate. Its pathway is cofactor biosynthesis; thiamine diphosphate biosynthesis; thiamine phosphate from 4-amino-2-methyl-5-diphosphomethylpyrimidine and 4-methyl-5-(2-phosphoethyl)-thiazole: step 1/1. Condenses 4-methyl-5-(beta-hydroxyethyl)thiazole monophosphate (THZ-P) and 2-methyl-4-amino-5-hydroxymethyl pyrimidine pyrophosphate (HMP-PP) to form thiamine monophosphate (TMP). The protein is Thiamine-phosphate synthase of Chlamydia abortus (strain DSM 27085 / S26/3) (Chlamydophila abortus).